We begin with the raw amino-acid sequence, 515 residues long: Maturase K (515 aa).

Belongs to the intron maturase 2 family. MatK subfamily.

Its subcellular location is the plastid. It localises to the chloroplast. In terms of biological role, usually encoded in the trnK tRNA gene intron. Probably assists in splicing its own and other chloroplast group II introns. The polypeptide is Maturase K (Pinus tabuliformis (Chinese red pine)).